Consider the following 100-residue polypeptide: Urease subunit gamma (100 aa).

It belongs to the urease gamma subunit family. Heterotrimer of UreA (gamma), UreB (beta) and UreC (alpha) subunits. Three heterotrimers associate to form the active enzyme.

It localises to the cytoplasm. The enzyme catalyses urea + 2 H2O + H(+) = hydrogencarbonate + 2 NH4(+). Its pathway is nitrogen metabolism; urea degradation; CO(2) and NH(3) from urea (urease route): step 1/1. This chain is Urease subunit gamma, found in Blochmanniella pennsylvanica (strain BPEN).